The chain runs to 250 residues: Adenosylcobinamide-GDP ribazoletransferase (250 aa).

6 helical membrane-spanning segments follow: residues 31–51 (ISYLPLVGLIIGGFNAIVYFV), 55–75 (FILGTLPIVLALLANTIITGA), 106–126 (VGTNGAIAIVFDFMLRYAVLN), 133–153 (IIIALILSPVVAKTVVTLLMC), 187–207 (IGYVLIGYKYVALLLITVLFI), and 230–250 (NEIAEIIFMLALLSFKGCGLL).

This sequence belongs to the CobS family. It depends on Mg(2+) as a cofactor.

Its subcellular location is the cell membrane. The enzyme catalyses alpha-ribazole + adenosylcob(III)inamide-GDP = adenosylcob(III)alamin + GMP + H(+). It catalyses the reaction alpha-ribazole 5'-phosphate + adenosylcob(III)inamide-GDP = adenosylcob(III)alamin 5'-phosphate + GMP + H(+). Its pathway is cofactor biosynthesis; adenosylcobalamin biosynthesis; adenosylcobalamin from cob(II)yrinate a,c-diamide: step 7/7. In terms of biological role, joins adenosylcobinamide-GDP and alpha-ribazole to generate adenosylcobalamin (Ado-cobalamin). Also synthesizes adenosylcobalamin 5'-phosphate from adenosylcobinamide-GDP and alpha-ribazole 5'-phosphate. In Clostridium novyi (strain NT), this protein is Adenosylcobinamide-GDP ribazoletransferase.